A 711-amino-acid polypeptide reads, in one-letter code: Polyribonucleotide nucleotidyltransferase (711 aa).

The Mg(2+) site is built by Asp-486 and Asp-492. The KH domain maps to 553–612 (PRIHTIKINPDKIKDVIGKGGSVIRALTEETGTTIEIEDDGTVKIAATDGEKAKHAIRRI). One can recognise an S1 motif domain in the interval 622–690 (GRVYTGKVTR…RQGRIRLSIK (69 aa)). Residues 689 to 711 (IKEATEQSQPAAAPEAPAAEQGE) form a disordered region. A compositionally biased stretch (low complexity) spans 694-711 (EQSQPAAAPEAPAAEQGE).

Belongs to the polyribonucleotide nucleotidyltransferase family. Component of the RNA degradosome, which is a multiprotein complex involved in RNA processing and mRNA degradation. Requires Mg(2+) as cofactor.

The protein resides in the cytoplasm. It carries out the reaction RNA(n+1) + phosphate = RNA(n) + a ribonucleoside 5'-diphosphate. In terms of biological role, involved in mRNA degradation. Catalyzes the phosphorolysis of single-stranded polyribonucleotides processively in the 3'- to 5'-direction. The protein is Polyribonucleotide nucleotidyltransferase of Escherichia coli O8 (strain IAI1).